A 241-amino-acid chain; its full sequence is Ashwin (241 aa).

3 disordered regions span residues 1-21, 82-102, and 212-241; these read MAAQGRGRVGGGKEERVSARS, KMMEKKRKQNEPKSENKSVTA, and KRSVPKDESDLPNDLKPTEAKKKIQHCTWP. Residues 11–21 show a composition bias toward basic and acidic residues; it reads GGKEERVSARS.

This sequence belongs to the ashwin family.

Its subcellular location is the nucleus. This Gallus gallus (Chicken) protein is Ashwin.